We begin with the raw amino-acid sequence, 468 residues long: Putative amidase AmiC (468 aa).

Catalysis depends on charge relay system residues K80 and S155. Catalysis depends on S179, which acts as the Acyl-ester intermediate.

Belongs to the amidase family.

It carries out the reaction a monocarboxylic acid amide + H2O = a monocarboxylate + NH4(+). This chain is Putative amidase AmiC (amiC), found in Mycobacterium leprae (strain TN).